Here is a 386-residue protein sequence, read N- to C-terminus: Phosphoglycerate kinase (386 aa).

Substrate contacts are provided by residues 21-23, Arg36, 59-62, Arg112, and Arg145; these read DLN and HLGR. ATP-binding positions include Lys196, Glu313, and 339–342; that span reads GGDT.

Belongs to the phosphoglycerate kinase family. In terms of assembly, monomer.

It localises to the cytoplasm. The enzyme catalyses (2R)-3-phosphoglycerate + ATP = (2R)-3-phospho-glyceroyl phosphate + ADP. It participates in carbohydrate degradation; glycolysis; pyruvate from D-glyceraldehyde 3-phosphate: step 2/5. The chain is Phosphoglycerate kinase from Haemophilus influenzae (strain PittEE).